A 39-amino-acid chain; its full sequence is Large ribosomal subunit protein bL12 (39 aa).

It belongs to the bacterial ribosomal protein bL12 family. In terms of assembly, homodimer. Part of the ribosomal stalk of the 50S ribosomal subunit. Forms a multimeric L10(L12)X complex, where L10 forms an elongated spine to which 2 to 4 L12 dimers bind in a sequential fashion. Binds GTP-bound translation factors.

In terms of biological role, forms part of the ribosomal stalk which helps the ribosome interact with GTP-bound translation factors. Is thus essential for accurate translation. The chain is Large ribosomal subunit protein bL12 (rplL) from Arthrobacter glacialis.